The sequence spans 174 residues: Small ribosomal subunit protein uS5 (174 aa).

In terms of domain architecture, S5 DRBM spans 16–79 (FSELIVSVRR…NAARKNMIRV (64 aa)).

It belongs to the universal ribosomal protein uS5 family. Part of the 30S ribosomal subunit. Contacts proteins S4 and S8.

Its function is as follows. With S4 and S12 plays an important role in translational accuracy. Functionally, located at the back of the 30S subunit body where it stabilizes the conformation of the head with respect to the body. The sequence is that of Small ribosomal subunit protein uS5 from Ehrlichia ruminantium (strain Gardel).